The sequence spans 337 residues: 1-aminocyclopropane-1-carboxylate deaminase (337 aa).

Lys50 bears the N6-(pyridoxal phosphate)lysine mark. Ser77 functions as the Nucleophile in the catalytic mechanism.

Belongs to the ACC deaminase/D-cysteine desulfhydrase family. Homotrimer. Requires pyridoxal 5'-phosphate as cofactor.

The catalysed reaction is 1-aminocyclopropane-1-carboxylate + H2O = 2-oxobutanoate + NH4(+). Functionally, catalyzes a cyclopropane ring-opening reaction, the irreversible conversion of 1-aminocyclopropane-1-carboxylate (ACC) to ammonia and alpha-ketobutyrate. Allows growth on ACC as a nitrogen source. The chain is 1-aminocyclopropane-1-carboxylate deaminase from Bradyrhizobium diazoefficiens (strain JCM 10833 / BCRC 13528 / IAM 13628 / NBRC 14792 / USDA 110).